Here is a 148-residue protein sequence, read N- to C-terminus: UPF0260 protein PC1_1943 (148 aa).

Belongs to the UPF0260 family.

The chain is UPF0260 protein PC1_1943 from Pectobacterium carotovorum subsp. carotovorum (strain PC1).